Consider the following 284-residue polypeptide: Nucleotide-binding protein SPO0713 (284 aa).

Residue 3 to 10 (GPSGAGRS) coordinates ATP. Residue 50-53 (DARN) participates in GTP binding.

Belongs to the RapZ-like family.

Its function is as follows. Displays ATPase and GTPase activities. This is Nucleotide-binding protein SPO0713 from Ruegeria pomeroyi (strain ATCC 700808 / DSM 15171 / DSS-3) (Silicibacter pomeroyi).